We begin with the raw amino-acid sequence, 448 residues long: Glutamyl-tRNA reductase (448 aa).

Residues 49–52, S109, 114–116, and Q120 each bind substrate; these read TCNR and ETQ. C50 (nucleophile) is an active-site residue. Position 189 to 194 (189 to 194) interacts with NADP(+); the sequence is GAGEMG.

It belongs to the glutamyl-tRNA reductase family. As to quaternary structure, homodimer.

It catalyses the reaction (S)-4-amino-5-oxopentanoate + tRNA(Glu) + NADP(+) = L-glutamyl-tRNA(Glu) + NADPH + H(+). It participates in porphyrin-containing compound metabolism; protoporphyrin-IX biosynthesis; 5-aminolevulinate from L-glutamyl-tRNA(Glu): step 1/2. In terms of biological role, catalyzes the NADPH-dependent reduction of glutamyl-tRNA(Glu) to glutamate 1-semialdehyde (GSA). In Staphylococcus epidermidis (strain ATCC 35984 / DSM 28319 / BCRC 17069 / CCUG 31568 / BM 3577 / RP62A), this protein is Glutamyl-tRNA reductase.